The primary structure comprises 75 residues: F1845 fimbrial adhesin operon regulatory protein DaaF (75 aa).

In terms of biological role, may have a possible regulatory function on the expression of the other daa genes. The protein is F1845 fimbrial adhesin operon regulatory protein DaaF (daaF) of Escherichia coli.